A 152-amino-acid polypeptide reads, in one-letter code: 6,7-dimethyl-8-ribityllumazine synthase (152 aa).

Residues Phe22, 56–58, and 79–81 contribute to the 5-amino-6-(D-ribitylamino)uracil site; these read AFE and AVI. (2S)-2-hydroxy-3-oxobutyl phosphate is bound at residue 84-85; it reads AT. His87 acts as the Proton donor in catalysis. A 5-amino-6-(D-ribitylamino)uracil-binding site is contributed by Phe112. Arg126 serves as a coordination point for (2S)-2-hydroxy-3-oxobutyl phosphate.

The protein belongs to the DMRL synthase family.

It carries out the reaction (2S)-2-hydroxy-3-oxobutyl phosphate + 5-amino-6-(D-ribitylamino)uracil = 6,7-dimethyl-8-(1-D-ribityl)lumazine + phosphate + 2 H2O + H(+). Its pathway is cofactor biosynthesis; riboflavin biosynthesis; riboflavin from 2-hydroxy-3-oxobutyl phosphate and 5-amino-6-(D-ribitylamino)uracil: step 1/2. Functionally, catalyzes the formation of 6,7-dimethyl-8-ribityllumazine by condensation of 5-amino-6-(D-ribitylamino)uracil with 3,4-dihydroxy-2-butanone 4-phosphate. This is the penultimate step in the biosynthesis of riboflavin. The sequence is that of 6,7-dimethyl-8-ribityllumazine synthase from Carboxydothermus hydrogenoformans (strain ATCC BAA-161 / DSM 6008 / Z-2901).